We begin with the raw amino-acid sequence, 112 residues long: MLVLRSAALFVVAALFEIGGAWLVWQGVREQRGWLWAAGGVLALGAYGFVATFQPDAHFGRILAAYGGIFVTGSILWGVVADGYRPDRWDIAGALVCLAGMALIMWAPRNGG.

4 helical membrane passes run 8 to 28, 33 to 53, 62 to 82, and 88 to 108; these read ALFVVAALFEIGGAWLVWQGV, GWLWAAGGVLALGAYGFVATF, ILAAYGGIFVTGSILWGVVAD, and RWDIAGALVCLAGMALIMWAP.

Belongs to the UPF0060 family.

The protein resides in the cell membrane. The polypeptide is UPF0060 membrane protein SCO3297 (Streptomyces coelicolor (strain ATCC BAA-471 / A3(2) / M145)).